The sequence spans 161 residues: Nucleotide-binding protein amb3630 (161 aa).

This sequence belongs to the YajQ family.

Functionally, nucleotide-binding protein. This chain is Nucleotide-binding protein amb3630, found in Paramagnetospirillum magneticum (strain ATCC 700264 / AMB-1) (Magnetospirillum magneticum).